Consider the following 448-residue polypeptide: Chaperone SurA (448 aa).

The N-terminal stretch at 1 to 27 (MKKTLRFAAVASGLVASLITVAPSASA) is a signal peptide. PpiC domains lie at 185 to 288 (QQDL…RLVE) and 301 to 399 (IVQT…QVLG).

It is found in the periplasm. It carries out the reaction [protein]-peptidylproline (omega=180) = [protein]-peptidylproline (omega=0). In terms of biological role, chaperone involved in the correct folding and assembly of outer membrane proteins. Recognizes specific patterns of aromatic residues and the orientation of their side chains, which are found more frequently in integral outer membrane proteins. May act in both early periplasmic and late outer membrane-associated steps of protein maturation. The polypeptide is Chaperone SurA (Burkholderia mallei (strain ATCC 23344)).